A 389-amino-acid polypeptide reads, in one-letter code: Phospho-N-acetylmuramoyl-pentapeptide-transferase (389 aa).

The next 10 membrane-spanning stretches (helical) occupy residues 25 to 45 (RAVMANLTALLIGLAFGPWVI), 74 to 94 (MGGVLVLVSIAVSTLLWCDWG), 97 to 117 (FIWVVMLVTFGYGAIGWVDDY), 134 to 154 (FFWQTLIGLVAAVYLAFSVSE), 190 to 210 (ISYPLGVAGFIVLTYLVIVGS), 222 to 242 (GLVIMPVVLVGGGLGVFAYVM), 259 to 279 (AGELLIFCSALAGAGLAFLWF), 286 to 306 (VFMGDVGALALGGALGTVAVI), 311 to 331 (IVLFVMGGIFVVETLSVMAQV), and 366 to 386 (QVTVRFWIITMLLVLIGLSTL).

Belongs to the glycosyltransferase 4 family. MraY subfamily. Requires Mg(2+) as cofactor.

The protein resides in the cell inner membrane. The enzyme catalyses UDP-N-acetyl-alpha-D-muramoyl-L-alanyl-gamma-D-glutamyl-meso-2,6-diaminopimeloyl-D-alanyl-D-alanine + di-trans,octa-cis-undecaprenyl phosphate = di-trans,octa-cis-undecaprenyl diphospho-N-acetyl-alpha-D-muramoyl-L-alanyl-D-glutamyl-meso-2,6-diaminopimeloyl-D-alanyl-D-alanine + UMP. The protein operates within cell wall biogenesis; peptidoglycan biosynthesis. In terms of biological role, catalyzes the initial step of the lipid cycle reactions in the biosynthesis of the cell wall peptidoglycan: transfers peptidoglycan precursor phospho-MurNAc-pentapeptide from UDP-MurNAc-pentapeptide onto the lipid carrier undecaprenyl phosphate, yielding undecaprenyl-pyrophosphoryl-MurNAc-pentapeptide, known as lipid I. This is Phospho-N-acetylmuramoyl-pentapeptide-transferase from Cupriavidus necator (strain ATCC 17699 / DSM 428 / KCTC 22496 / NCIMB 10442 / H16 / Stanier 337) (Ralstonia eutropha).